A 156-amino-acid polypeptide reads, in one-letter code: Protein BUNDLE SHEATH DEFECTIVE 2, chloroplastic (156 aa).

Residues 1–41 (MNSAALNARTASVAPQPQACHACKCRQLLSRRVPPAQRQVE) constitute a chloroplast transit peptide. The Zn(2+) site is built by cysteine 78, cysteine 81, cysteine 89, cysteine 92, cysteine 133, cysteine 136, cysteine 144, and cysteine 147.

Belongs to the BSD2 chaperone family. Interacts with the RuBisCo large subunit (RbcL) assembled as an intermediate complex made of eight RbcL and eight BSD2 subunits.

Its subcellular location is the plastid. It is found in the chloroplast stroma. In terms of biological role, chloroplast chaperone required for RuBisCo biogenesis and translational regulation of the RuBisCo large subunit (RbcL). Stabilizes an end-state assembly intermediate of eight RbcL subunits until the small subunits (RBCSs) become available to produce a complete stable RuBisCo complex containing eight small and eight large subunits. This is Protein BUNDLE SHEATH DEFECTIVE 2, chloroplastic from Chlamydomonas reinhardtii (Chlamydomonas smithii).